The following is an 878-amino-acid chain: Alanine--tRNA ligase (878 aa).

Positions 566, 570, 668, and 672 each coordinate Zn(2+).

Belongs to the class-II aminoacyl-tRNA synthetase family. Zn(2+) is required as a cofactor.

It is found in the cytoplasm. It catalyses the reaction tRNA(Ala) + L-alanine + ATP = L-alanyl-tRNA(Ala) + AMP + diphosphate. Catalyzes the attachment of alanine to tRNA(Ala) in a two-step reaction: alanine is first activated by ATP to form Ala-AMP and then transferred to the acceptor end of tRNA(Ala). Also edits incorrectly charged Ser-tRNA(Ala) and Gly-tRNA(Ala) via its editing domain. This Bacillus subtilis (strain 168) protein is Alanine--tRNA ligase.